Consider the following 494-residue polypeptide: Caspase-8 (494 aa).

A propeptide spanning residues 1–242 (MAGSNLLIHL…QEIESDNQQS (242 aa)) is cleaved from the precursor. Active-site residues include His345 and Cys386. Positions 401 to 410 (RIDVTTVSPD) are excised as a propeptide.

The protein belongs to the peptidase C14A family. Heterotetramer that consists of two anti-parallel arranged heterodimers, each one formed by a 15 kDa (caspase-8 subunit p15) and a 10 kDa (caspase-8 subunit p10) subunit. Interacts (via N-terminus) with Diap2; likely to bind Diap2 simultaneously with Fadd to form a trimeric complex. Interacts with Dark (via N-terminus). Post-translationally, polyubiquitinated by Diap2 following activation of the immune deficiency (Imd) pathway. In terms of tissue distribution, constitutively expressed in fat bodies of larvae and adults.

Its subcellular location is the cytoplasm. The enzyme catalyses Strict requirement for Asp at position P1 and has a preferred cleavage sequence of (Leu/Asp/Val)-Glu-Thr-Asp-|-(Gly/Ser/Ala).. Functionally, effector of the programmed cell death (PCD) activators rpr, grim and hid. May play an apoptotic role in the germline as well as soma. Fadd interacts with Dredd to promote cleavage of Dredd and is necessary and sufficient for enhancing Dredd-induced apoptosis. Plays a role in the innate immune response. Required for resistance to Gram-negative bacterial infection. Diap2-mediated ubiquitination of Dredd is critical for processing of imd and rel and the subsequent expression of antimicrobial genes such as DptA. The chain is Caspase-8 from Drosophila melanogaster (Fruit fly).